The primary structure comprises 533 residues: Thromboxane-A synthase (533 aa).

The Cytoplasmic portion of the chain corresponds to 1–10; that stretch reads MEVLGLLKFE. The chain crosses the membrane as a helical span at residues 11–31; the sequence is VSGTIVTVTLLVALLALLKWY. The Lumenal segment spans residues 32–75; that stretch reads SMSAFSRLEKLGIRHPKPSPFVGNLMFFRQGFWESQLELRERYG. Residues 76–96 traverse the membrane as a helical segment; sequence PLCGYYLGRRMHVVISEPDMI. Residues 97–223 are Cytoplasmic-facing; that stretch reads KQVLVENFSN…RRASTFCIPR (127 aa). A helical membrane pass occupies residues 224-244; that stretch reads PLLVLILSFPSIMVPLARILP. Residues 245 to 335 are Lumenal-facing; sequence NKNRDELNGF…FTVDEIVGQA (91 aa). A helical transmembrane segment spans residues 336–356; that stretch reads FLFLIAGHEVITNTLSFITYL. The Cytoplasmic segment spans residues 357-533; the sequence is LATHPDCQER…NGVYIKIVSR (177 aa). A heme-binding site is contributed by C479.

It belongs to the cytochrome P450 family. As to quaternary structure, monomer. Heme serves as cofactor. Expressed primarily in lung, kidney, and spleen.

Its subcellular location is the endoplasmic reticulum membrane. It catalyses the reaction prostaglandin H2 = thromboxane A2. The catalysed reaction is prostaglandin H2 = (12S)-hydroxy-(5Z,8E,10E)-heptadecatrienoate + malonaldehyde. It carries out the reaction a hydroperoxyeicosatetraenoate = an oxoeicosatetraenoate + H2O. The enzyme catalyses (15S)-hydroperoxy-(5Z,8Z,11Z,13E)-eicosatetraenoate = 15-oxo-(5Z,8Z,11Z,13E)-eicosatetraenoate + H2O. It catalyses the reaction (15S)-hydroperoxy-(5Z,8Z,11Z,13E)-eicosatetraenoate + AH2 = (15S)-hydroxy-(5Z,8Z,11Z,13E)-eicosatetraenoate + A + H2O. Functionally, catalyzes the conversion of prostaglandin H2 (PGH2) to thromboxane A2 (TXA2), a potent inducer of blood vessel constriction and platelet aggregation. Also cleaves PGH2 to 12-hydroxy-heptadecatrienoicacid (12-HHT) and malondialdehyde, which is known to act as a mediator of DNA damage. 12-HHT and malondialdehyde are formed stoichiometrically in the same amounts as TXA2. Additionally, displays dehydratase activity, toward (15S)-hydroperoxy-(5Z,8Z,11Z,13E)-eicosatetraenoate (15(S)-HPETE) producing 15-KETE and 15-HETE. The protein is Thromboxane-A synthase (Tbxas1) of Mus musculus (Mouse).